Here is a 780-residue protein sequence, read N- to C-terminus: ATPase family gene 2 protein (780 aa).

A compositionally biased stretch (low complexity) spans methionine 1–alanine 23. The tract at residues methionine 1–serine 26 is disordered. Residues glycine 286–threonine 293 and glycine 557–threonine 564 each bind ATP.

Belongs to the AAA ATPase family. AFG2 subfamily. Homohexamer; ATP binding induces oligomerization. Forms a ring-shaped particle of about 12 nm diameter, that displays 6-fold radial symmetry. Associates with cytoplasmic pre-60S ribosomal particles containing ARX1, ALB1, RLP24 and NOG1. Binds to pre-60S ribosomal particles soon after their export from the nucleus and is released before REI1 and LSG1 are incorporated into the particles. Hexameric form interacts with RLP24 (via C-terminal); the interaction recruits AFG2 to pre-60S ribosomal particles and promotes AFG2 ATPase activity and RLP24 release from pre-60S ribosomal particles. Interacts (via N-terminus) with nucleoporin NUP116 (via N-terminus); the interaction is required for RLP24 release from pre-60S ribosomal particles.

It is found in the cytoplasm. The enzyme catalyses ATP + H2O = ADP + phosphate + H(+). The hexamer is activated by RLP24 during pre-60S ribosomal particle maturation; RLP24 activates ATPase activity of both ATP-binding regions and increases cooperativity between AFG2 subunits. The second ATP-binding region is inhibited by diazaborine; the inhibition requires prior ATP binding specifically to the second ATP-binding region. Functionally, ATP-dependent chaperone which uses the energy provided by ATP hydrolysis to generate mechanical force to disassemble protein complexes. Plays an essential role in the cytoplasmic maturation steps of pre-60S ribosomal particles by promoting the release of shuttling protein RLP24 from the pre-ribosomal particles. This step facilitates the subsequent release of other shuttling proteins such as NOG1 and allows the transition of the pre-ribosomal particles to later maturation forms that bind REI1. Essential for viability. The protein is ATPase family gene 2 protein of Saccharomyces cerevisiae (strain ATCC 204508 / S288c) (Baker's yeast).